The primary structure comprises 164 residues: Methanogen homoaconitase small subunit 2 (164 aa).

The YLRT signature appears at 26–29; that stretch reads YLRT.

Belongs to the LeuD family. LeuD type 2 subfamily. In terms of assembly, heterotetramer of 2 HacA and 2 HacB proteins. Cannot form a complex with LeuC.

It catalyses the reaction (2R)-homocitrate = (2R,3S)-homoisocitrate. The catalysed reaction is (2R)-homocitrate = cis-homoaconitate + H2O. The enzyme catalyses (2R,3S)-homoisocitrate = cis-homoaconitate + H2O. It carries out the reaction cis-(homo)2aconitate + H2O = (2R,3S)-iso(homo)2citrate. It catalyses the reaction cis-(homo)3aconitate + H2O = (2R,3S)-iso(homo)3citrate. The protein operates within organic acid metabolism; 2-oxosuberate biosynthesis. In terms of biological role, component of a hydro-lyase with broad substrate specificity for cis-unsaturated tricarboxylic acids. Catalyzes both the reversible dehydration of (R)-homocitrate ((R)-2-hydroxybutane-1,2,4-tricarboxylate) to produce cis-homoaconitate ((Z)-but-1-ene-1,2,4-tricarboxylate), and its hydration to homoisocitrate ((1R,2S)-1-hydroxybutane-1,2,4-tricarboxylate). Is also able to hydrate the analogous longer chain substrates cis-homo(2)-aconitate, cis-homo(3)-aconitate. These reactions are part of the biosynthesis pathway of coenzyme B. In Methanosarcina acetivorans (strain ATCC 35395 / DSM 2834 / JCM 12185 / C2A), this protein is Methanogen homoaconitase small subunit 2 (hacB2).